The primary structure comprises 295 residues: Acetylglutamate kinase (295 aa).

Substrate contacts are provided by residues 64–65 (GG), R86, and N190.

The protein belongs to the acetylglutamate kinase family. ArgB subfamily.

It is found in the cytoplasm. It catalyses the reaction N-acetyl-L-glutamate + ATP = N-acetyl-L-glutamyl 5-phosphate + ADP. It participates in amino-acid biosynthesis; L-arginine biosynthesis; N(2)-acetyl-L-ornithine from L-glutamate: step 2/4. In terms of biological role, catalyzes the ATP-dependent phosphorylation of N-acetyl-L-glutamate. This chain is Acetylglutamate kinase, found in Oleidesulfovibrio alaskensis (strain ATCC BAA-1058 / DSM 17464 / G20) (Desulfovibrio alaskensis).